A 231-amino-acid polypeptide reads, in one-letter code: Cytidylate kinase (231 aa).

Residue Gly18 to Ser26 participates in ATP binding.

Belongs to the cytidylate kinase family. Type 1 subfamily.

Its subcellular location is the cytoplasm. It carries out the reaction CMP + ATP = CDP + ADP. The catalysed reaction is dCMP + ATP = dCDP + ADP. This chain is Cytidylate kinase, found in Streptomyces coelicolor (strain ATCC BAA-471 / A3(2) / M145).